The chain runs to 320 residues: Cytochrome f (320 aa).

An N-terminal signal peptide occupies residues 1–35; the sequence is MQTRKTFSWIKEQIARSISVSLLIYIITRTSISSA. Residues Y36, C56, C59, and H60 each coordinate heme. The chain crosses the membrane as a helical span at residues 286–306; sequence VQGLLFFLASVILAQIFLVLK.

This sequence belongs to the cytochrome f family. In terms of assembly, the 4 large subunits of the cytochrome b6-f complex are cytochrome b6, subunit IV (17 kDa polypeptide, petD), cytochrome f and the Rieske protein, while the 4 small subunits are PetG, PetL, PetM and PetN. The complex functions as a dimer. Heme is required as a cofactor.

It localises to the plastid. It is found in the chloroplast thylakoid membrane. In terms of biological role, component of the cytochrome b6-f complex, which mediates electron transfer between photosystem II (PSII) and photosystem I (PSI), cyclic electron flow around PSI, and state transitions. The polypeptide is Cytochrome f (Jasminum nudiflorum (Winter jasmine)).